We begin with the raw amino-acid sequence, 245 residues long: tRNA1(Val) (adenine(37)-N6)-methyltransferase (245 aa).

This sequence belongs to the methyltransferase superfamily. tRNA (adenine-N(6)-)-methyltransferase family.

It is found in the cytoplasm. The enzyme catalyses adenosine(37) in tRNA1(Val) + S-adenosyl-L-methionine = N(6)-methyladenosine(37) in tRNA1(Val) + S-adenosyl-L-homocysteine + H(+). Functionally, specifically methylates the adenine in position 37 of tRNA(1)(Val) (anticodon cmo5UAC). In Salmonella typhi, this protein is tRNA1(Val) (adenine(37)-N6)-methyltransferase.